Reading from the N-terminus, the 172-residue chain is MACCSTSFCGFPICSTGGTCGSSPCQPTCCQTSCCQPTSIQTSCCQPISIQTSCCQPTSIQTSCCQPTCLQTSGCETGCGIGGSIGYGQVGSSGAVSSRTRWCRPDCRVEGTSLPPCCVVSCTPPSCCQLYYAQASCCRPSYCGQSCCRPACCCQPTCIEPICEPSCCEPTC.

N-acetylalanine is present on A2. Repeats lie at residues P27–Q36, P37–Q46, P47–Q56, P57–Q66, and P67–E76.

Its function is as follows. The keratin products of mammalian epidermal derivatives such as wool and hair consist of microfibrils embedded in a rigid matrix of other proteins. The matrix proteins include the high-sulfur and high-tyrosine keratins, having molecular weights of 6-20 kDa, whereas the microfibrils contain the larger, low-sulfur keratins (40-56 kDa). This is Keratin, high-sulfur matrix protein, B2A from Ovis aries (Sheep).